The primary structure comprises 592 residues: LIM domain-binding protein 1 (592 aa).

Disordered stretches follow at residues 14-41 and 305-368; these read GHPP…NSQN and PAPE…NPMT. Positions 23–41 are enriched in polar residues; it reads ESSNSHYGMPPSQGTNSQN. A compositionally biased stretch (low complexity) spans 322–344; the sequence is PAANPRGSKKATAAAAAAAAAAT. A compositionally biased stretch (polar residues) spans 352–368; it reads PTASPANNQQFPPNPMT. The region spanning 378–417 is the LIM interaction domain (LID) domain; sequence DVMVVGEPSMMGSEFGENDERTISRVENSQYDPNAMQMQS. 2 disordered regions span residues 437-458 and 559-592; these read HHPG…MGSQ and GGMQ…MITG. Positions 577 to 586 are enriched in pro residues; it reads GPPPQWPPPN.

This sequence belongs to the LDB family. Interacts with blmp-1. As to expression, expressed in all neurons and some other tissues of the adult, including vulval muscle, and, in males, all the neurons of the tail region. Expressed in vulval cells.

In terms of biological role, binds to the LIM domain of LIM domain-containing transcription factors. Required for the blmp-1-mediated transcriptional activation or repression of several hypodermal genes, such as bed-3. Regulates sam-10 nuclear localization in PLM neurons. Has a role in synaptic differentiation of PLM mechanosensory neurons. Involved in gonadogenesis. This chain is LIM domain-binding protein 1, found in Caenorhabditis elegans.